We begin with the raw amino-acid sequence, 1065 residues long: MVAYLNIHTAYDLLNSSLKIEDAVRLAVSENVDALAITDTNVLYGFPKFYDACIANNIKPIFGMTIYVTNGLNTVETVVLAKNNDGLKDLYQLSSEIKMNALEHVSFELLKRFSNNMIIIFKKVGDQHRDIVQVFETHNDTYMDHLSISIQGRKHVWIQNVCYQTRQDADTISALAAIRDNTKLDLIHDQEDFGAHFLTEKEINQLDINQEYLTQVDVIAQKCDAELKYHQSLLPQYETPNDESAKKYLWRVLVTQLKKLELNYDVYLERLKYEYKVITNMGFEDYFLIVSDLIHYAKTNDVMVGPGRGSSAGSLVSYLLGITTIDPIKFNLLFERFLNPERVTMPDIDIDFEDTRRERVIQYVQEKYGELHVSGIVTFGHLLARAVARDVGRIMGFDEVTLNEISSLIPHKLGITLDEAYQIDDFKKFVHRNHRHERWFSICKKLEGLPRHTSTHAAGIIINDHPLYEYAPLTKGDTGLLTQWTMTEAERIGLLKIDFLGLRNLSIIHQILTQVKKDLGINIDIEKIPFDDQKVFELLSQGDTTGIFQLESDGVRSVLKKLKPEHFEDIVAVTSLYRPGPMEEIPTYITRRHDPSKVQYLHPHLEPILKNTYGVIIYQEQIMQIASTFANFSYGEADILRRAMSKKNRAVLESERQHFIEGAKQNGYHEDISKQIFDLILKFADYGFPRAHAVSYSKIAYIMSFLKVHYPNYFYANILSNVIGSEKKTAQMIEEAKKQGITILPPNINESHWFYKPSQEGIYLSIGTIKGVGYQSVKVIVDERYQNGKFKDFFDFARRIPKRVKTRKLLEALILVGAFDAFGKTRSTLLQAIDQVLDGDLNIEQDGFLFDILTPKQMYEDKEELPDALISQYEKEYLGFYVSQHPVDKKFVAKQYLTIFKLSNAQNNKPILVQFDKVKQIRTKNGQNMAFVTLNDGIETLDGVIFPNQFKKYEELLSHNDLFIVSGKFDHRKQQRQLIINEIQTLATFEEQKLAFAKQIIIRNKSQIDMFEEMIKATKENANDVVLSFYDETIKQMTTLGYINQKDSMFNNFIQSFNPSDIRLI.

It belongs to the DNA polymerase type-C family. DnaE subfamily. DNA polymerase III contains a core (composed of alpha, epsilon and theta chains) that associates with a tau subunit. This core dimerizes to form the PolIII' complex. PolIII' associates with the gamma complex (composed of gamma, delta, delta', psi and chi chains) and with the beta chain to form the complete DNA polymerase III complex.

It is found in the cytoplasm. It catalyses the reaction DNA(n) + a 2'-deoxyribonucleoside 5'-triphosphate = DNA(n+1) + diphosphate. Its function is as follows. DNA polymerase III is a complex, multichain enzyme responsible for most of the replicative synthesis in bacteria. This DNA polymerase also exhibits 3' to 5' exonuclease activity. The alpha chain is the DNA polymerase. This chain is DNA polymerase III subunit alpha (dnaE), found in Staphylococcus aureus (strain MSSA476).